Reading from the N-terminus, the 95-residue chain is Cytosolic calcium-binding protein 3 (95 aa).

A run of 6 repeats spans residues 30–35, 39–43, 54–59, 67–71, 75–79, and 90–94. The interval 30–94 is 6 X 5 AA approximate repeats of V-E-E-K-K; the sequence is VEDAEKTNED…AEEVAVEKAK (65 aa). Positions 54–95 are disordered; the sequence is VEEEKKAEEVTETPEEKKTEALEEKQTEVAAAEEVAVEKAKE. The segment covering 55 to 80 has biased composition (basic and acidic residues); it reads EEEKKAEEVTETPEEKKTEALEEKQT.

Low levels in roots (e.g. in cambium) and barely expressed in stems, shoots, flowers, siliques and leaves.

It localises to the cytoplasm. The protein localises to the cytosol. Its function is as follows. Binds calcium Ca(2+) and may act as a signal mediator to buffer Ca(2+). This chain is Cytosolic calcium-binding protein 3, found in Arabidopsis thaliana (Mouse-ear cress).